Reading from the N-terminus, the 364-residue chain is Putative transport protein BUsg_115 (364 aa).

The next 9 membrane-spanning stretches (helical) occupy residues 18–38 (IFII…ILGF), 40–60 (WASM…KFLG), 65–85 (VAVI…IVFL), 161–181 (GLFI…YWNG), 215–235 (ALGV…GLLI), 243–263 (LLMI…PILI), 280–300 (LLLI…PFFI), 309–329 (FLIL…GLFI), and 331–351 (PVVL…ISIA).

Belongs to the autoinducer-2 exporter (AI-2E) (TC 2.A.86) family.

The protein localises to the cell membrane. The polypeptide is Putative transport protein BUsg_115 (Buchnera aphidicola subsp. Schizaphis graminum (strain Sg)).